We begin with the raw amino-acid sequence, 147 residues long: Large ribosomal subunit protein uL22 (147 aa).

The segment at 110-147 (EEKKTVAKKAPAAKKTTTTKAPAKKTTSTKKATAKKES) is disordered. A compositionally biased stretch (low complexity) spans 117-140 (KKAPAAKKTTTTKAPAKKTTSTKK).

The protein belongs to the universal ribosomal protein uL22 family. In terms of assembly, part of the 50S ribosomal subunit.

Its function is as follows. This protein binds specifically to 23S rRNA; its binding is stimulated by other ribosomal proteins, e.g. L4, L17, and L20. It is important during the early stages of 50S assembly. It makes multiple contacts with different domains of the 23S rRNA in the assembled 50S subunit and ribosome. Functionally, the globular domain of the protein is located near the polypeptide exit tunnel on the outside of the subunit, while an extended beta-hairpin is found that lines the wall of the exit tunnel in the center of the 70S ribosome. The protein is Large ribosomal subunit protein uL22 of Campylobacter jejuni subsp. jejuni serotype O:6 (strain 81116 / NCTC 11828).